Reading from the N-terminus, the 491-residue chain is Protein nucleotidyltransferase YdiU (491 aa).

ATP-binding residues include Gly-88, Gly-90, Arg-91, Lys-111, Asp-123, Gly-124, Arg-174, and Arg-181. Catalysis depends on Asp-250, which acts as the Proton acceptor. Mg(2+) is bound by residues Asn-251 and Asp-260. Asp-260 contacts ATP.

Belongs to the SELO family. The cofactor is Mg(2+). Mn(2+) is required as a cofactor.

It catalyses the reaction L-seryl-[protein] + ATP = 3-O-(5'-adenylyl)-L-seryl-[protein] + diphosphate. The catalysed reaction is L-threonyl-[protein] + ATP = 3-O-(5'-adenylyl)-L-threonyl-[protein] + diphosphate. It carries out the reaction L-tyrosyl-[protein] + ATP = O-(5'-adenylyl)-L-tyrosyl-[protein] + diphosphate. The enzyme catalyses L-histidyl-[protein] + UTP = N(tele)-(5'-uridylyl)-L-histidyl-[protein] + diphosphate. It catalyses the reaction L-seryl-[protein] + UTP = O-(5'-uridylyl)-L-seryl-[protein] + diphosphate. The catalysed reaction is L-tyrosyl-[protein] + UTP = O-(5'-uridylyl)-L-tyrosyl-[protein] + diphosphate. Functionally, nucleotidyltransferase involved in the post-translational modification of proteins. It can catalyze the addition of adenosine monophosphate (AMP) or uridine monophosphate (UMP) to a protein, resulting in modifications known as AMPylation and UMPylation. This chain is Protein nucleotidyltransferase YdiU, found in Bradyrhizobium diazoefficiens (strain JCM 10833 / BCRC 13528 / IAM 13628 / NBRC 14792 / USDA 110).